The chain runs to 785 residues: Protein kintoun (785 aa).

Basic and acidic residues-rich tracts occupy residues 622-638 (EHNEQCTDHSESERDTS) and 662-679 (HNIELGREHTSERDKEPK). Disordered stretches follow at residues 622 to 698 (EHNE…DSHL) and 719 to 749 (KSSVQTTQESDLDEDDMPDNSDHLQNSASSN). Residues 681–695 (TSCTAESTSGQQPND) are compositionally biased toward polar residues. Residues 728 to 737 (SDLDEDDMPD) are compositionally biased toward acidic residues.

It belongs to the PIH1 family. Kintoun subfamily.

It localises to the cytoplasm. It is found in the dynein axonemal particle. In terms of biological role, required for cytoplasmic pre-assembly of axonemal dyneins, thereby playing a central role in motility in cilia and flagella. Involved in pre-assembly of dynein arm complexes in the cytoplasm before intraflagellar transport loads them for the ciliary compartment. This is Protein kintoun from Xenopus tropicalis (Western clawed frog).